Here is a 417-residue protein sequence, read N- to C-terminus: UDP-N-acetylglucosamine 1-carboxyvinyltransferase (417 aa).

Position 22–23 (lysine 22–asparagine 23) interacts with phosphoenolpyruvate. A UDP-N-acetyl-alpha-D-glucosamine-binding site is contributed by arginine 93. The active-site Proton donor is cysteine 117. The residue at position 117 (cysteine 117) is a 2-(S-cysteinyl)pyruvic acid O-phosphothioketal. Residues arginine 122–glutamine 126, aspartate 305, and isoleucine 327 contribute to the UDP-N-acetyl-alpha-D-glucosamine site.

Belongs to the EPSP synthase family. MurA subfamily.

The protein resides in the cytoplasm. The enzyme catalyses phosphoenolpyruvate + UDP-N-acetyl-alpha-D-glucosamine = UDP-N-acetyl-3-O-(1-carboxyvinyl)-alpha-D-glucosamine + phosphate. It participates in cell wall biogenesis; peptidoglycan biosynthesis. Functionally, cell wall formation. Adds enolpyruvyl to UDP-N-acetylglucosamine. The polypeptide is UDP-N-acetylglucosamine 1-carboxyvinyltransferase (Chromobacterium violaceum (strain ATCC 12472 / DSM 30191 / JCM 1249 / CCUG 213 / NBRC 12614 / NCIMB 9131 / NCTC 9757 / MK)).